Here is a 280-residue protein sequence, read N- to C-terminus: Putative pyruvate, phosphate dikinase regulatory protein (280 aa).

156-163 (GVSRTSKT) is a binding site for ADP.

This sequence belongs to the pyruvate, phosphate/water dikinase regulatory protein family. PDRP subfamily.

The enzyme catalyses N(tele)-phospho-L-histidyl/L-threonyl-[pyruvate, phosphate dikinase] + ADP = N(tele)-phospho-L-histidyl/O-phospho-L-threonyl-[pyruvate, phosphate dikinase] + AMP + H(+). It catalyses the reaction N(tele)-phospho-L-histidyl/O-phospho-L-threonyl-[pyruvate, phosphate dikinase] + phosphate + H(+) = N(tele)-phospho-L-histidyl/L-threonyl-[pyruvate, phosphate dikinase] + diphosphate. Bifunctional serine/threonine kinase and phosphorylase involved in the regulation of the pyruvate, phosphate dikinase (PPDK) by catalyzing its phosphorylation/dephosphorylation. In Hyphomonas neptunium (strain ATCC 15444), this protein is Putative pyruvate, phosphate dikinase regulatory protein.